The primary structure comprises 142 residues: HTH-type transcriptional regulator LysM (142 aa).

Residues 6 to 69 enclose the HTH asnC-type domain; sequence IDESDLKILE…ELENEIRAIV (64 aa). Positions 25 to 44 form a DNA-binding region, H-T-H motif; the sequence is YTLIAKELKVSEAAIRKRIE.

As to quaternary structure, homotetramer.

The protein resides in the cytoplasm. It participates in amino-acid biosynthesis; L-lysine biosynthesis via AAA pathway [regulation]. Its function is as follows. In the absence or at low concentrations of lysine, activates the biosynthesis of this amino acid via the alpha-aminoadipate (AAA) pathway. The sequence is that of HTH-type transcriptional regulator LysM (lysM) from Saccharolobus solfataricus (strain ATCC 35092 / DSM 1617 / JCM 11322 / P2) (Sulfolobus solfataricus).